The primary structure comprises 65 residues: Beta-defensin 106A (65 aa).

A signal peptide spans 1–20 (MRTFLFLFAVLFFLTPAKNE). Intrachain disulfides connect cysteine 26-cysteine 53, cysteine 33-cysteine 47, and cysteine 37-cysteine 54.

It belongs to the beta-defensin family. Monomer. Interacts with CCR2 (via extracellular N-terminal region); this interaction may preferentially require specific tyrosine sulfation on CCR2.

It is found in the secreted. Its subcellular location is the membrane. In terms of biological role, has antibacterial activity. Acts as a ligand for C-C chemokine receptor CCR2. This chain is Beta-defensin 106A (DEFB106A), found in Pongo pygmaeus (Bornean orangutan).